A 457-amino-acid chain; its full sequence is Argininosuccinate lyase (457 aa).

Belongs to the lyase 1 family. Argininosuccinate lyase subfamily.

Its subcellular location is the cytoplasm. It carries out the reaction 2-(N(omega)-L-arginino)succinate = fumarate + L-arginine. It functions in the pathway amino-acid biosynthesis; L-arginine biosynthesis; L-arginine from L-ornithine and carbamoyl phosphate: step 3/3. This Psychrobacter cryohalolentis (strain ATCC BAA-1226 / DSM 17306 / VKM B-2378 / K5) protein is Argininosuccinate lyase.